The following is a 267-amino-acid chain: Potassium channel regulatory protein (267 aa).

In terms of domain architecture, BTB spans 5–74 (ELVTLNVGGK…LRTQQLLLPT (70 aa)).

In terms of assembly, can form homooligomers. Interacts with KCNA1 (via cytoplasmic N-terminal domain) and KCNA4.

It is found in the endoplasmic reticulum. In terms of biological role, inhibits potassium fluxes in cells. May regulate Kv1 family channel proteins by retaining a fraction of channels in endomembranes. In Bos taurus (Bovine), this protein is Potassium channel regulatory protein (KCNRG).